The primary structure comprises 117 residues: Large ribosomal subunit protein bL20 (117 aa).

It belongs to the bacterial ribosomal protein bL20 family.

Binds directly to 23S ribosomal RNA and is necessary for the in vitro assembly process of the 50S ribosomal subunit. It is not involved in the protein synthesizing functions of that subunit. In Vibrio campbellii (strain ATCC BAA-1116), this protein is Large ribosomal subunit protein bL20.